Reading from the N-terminus, the 296-residue chain is MSLGAKPFGEKKFIEIKGRRMAYIDEGTGDPILFQHGNPTSSYLWRNIMPHCAGLGRLIACDLIGMGDSDKLDPSGPERYTYAEHRDYLDALWEALDLGDRVVLVVHDWGSVLGFDWARRHRERVQGIAYMEAVTMPLEWADFPEQDRDLFQAFRSQAGEELVLQDNVFVEQVLPGLILRPLSEAEMAAYREPFLAAGEARRPTLSWPRQIPIAGTPADVVAIARDYAGWLSESPIPKLFINAEPGHLTTGRIRDFCRTWPNQTEITVAGAHFIQEDSPDEIGAAIAAFVRRLRPA.

Positions 31–155 constitute an AB hydrolase-1 domain; the sequence is PILFQHGNPT…QDRDLFQAFR (125 aa). Asp108 serves as the catalytic Nucleophile. Catalysis depends on Glu132, which acts as the Proton donor. The active-site Proton acceptor is the His272.

It belongs to the haloalkane dehalogenase family. Type 2 subfamily. Monomer.

The protein resides in the periplasm. The catalysed reaction is 1-haloalkane + H2O = a halide anion + a primary alcohol + H(+). It carries out the reaction (3R,6R)-1,3,4,6-tetrachlorocyclohexa-1,4-diene + 2 H2O = 2,5-dichlorocyclohexa-2,5-dien-1,4-diol + 2 chloride + 2 H(+). It functions in the pathway xenobiotic degradation; gamma-hexachlorocyclohexane degradation. Its function is as follows. Catalyzes hydrolytic cleavage of carbon-halogen bonds in halogenated aliphatic compounds, leading to the formation of the corresponding primary alcohols, halide ions and protons. Is involved in the degradation of the important environmental pollutant gamma-hexachlorocyclohexane (gamma-HCH or lindane) as it also catalyzes conversion of 1,3,4,6-tetrachloro-1,4-cyclohexadiene (1,4-TCDN) to 2,5-dichloro-2,5-cyclohexadiene-1,4-diol (2,5-DDOL) via the intermediate 2,4,5-trichloro-2,5-cyclohexadiene-1-ol (2,4,5-DNOL). The polypeptide is Haloalkane dehalogenase (Sphingobium indicum (strain DSM 16412 / CCM 7286 / MTCC 6364 / B90A)).